We begin with the raw amino-acid sequence, 75 residues long: Protein Tlp homolog (75 aa).

The disordered stretch occupies residues 53 to 75 (REALDGMREEIKDEARDKKNGYM).

The protein belongs to the Tlp family.

The protein is Protein Tlp homolog of Clostridium botulinum (strain ATCC 19397 / Type A).